The primary structure comprises 107 residues: Thiosulfate sulfurtransferase GlpE (107 aa).

The 85-residue stretch at 17–101 (AAGAARLVDI…GFEAWRREFP (85 aa)) folds into the Rhodanese domain. The Cysteine persulfide intermediate role is filled by Cys65.

The protein belongs to the GlpE family.

It is found in the cytoplasm. It catalyses the reaction thiosulfate + hydrogen cyanide = thiocyanate + sulfite + 2 H(+). The catalysed reaction is thiosulfate + [thioredoxin]-dithiol = [thioredoxin]-disulfide + hydrogen sulfide + sulfite + 2 H(+). Its function is as follows. Transferase that catalyzes the transfer of sulfur from thiosulfate to thiophilic acceptors such as cyanide or dithiols. May function in a CysM-independent thiosulfate assimilation pathway by catalyzing the conversion of thiosulfate to sulfite, which can then be used for L-cysteine biosynthesis. The sequence is that of Thiosulfate sulfurtransferase GlpE from Aeromonas hydrophila subsp. hydrophila (strain ATCC 7966 / DSM 30187 / BCRC 13018 / CCUG 14551 / JCM 1027 / KCTC 2358 / NCIMB 9240 / NCTC 8049).